A 268-amino-acid chain; its full sequence is Tryptophan synthase alpha chain (268 aa).

Active-site proton acceptor residues include Glu49 and Asp60.

The protein belongs to the TrpA family. Tetramer of two alpha and two beta chains.

It carries out the reaction (1S,2R)-1-C-(indol-3-yl)glycerol 3-phosphate + L-serine = D-glyceraldehyde 3-phosphate + L-tryptophan + H2O. It functions in the pathway amino-acid biosynthesis; L-tryptophan biosynthesis; L-tryptophan from chorismate: step 5/5. Functionally, the alpha subunit is responsible for the aldol cleavage of indoleglycerol phosphate to indole and glyceraldehyde 3-phosphate. This chain is Tryptophan synthase alpha chain, found in Pseudomonas aeruginosa (strain ATCC 15692 / DSM 22644 / CIP 104116 / JCM 14847 / LMG 12228 / 1C / PRS 101 / PAO1).